Reading from the N-terminus, the 221-residue chain is Iron-sulfur cluster repair protein YtfE (221 aa).

Belongs to the RIC family. YtfE subfamily. As to quaternary structure, homodimer.

Its subcellular location is the cytoplasm. Its function is as follows. Di-iron-containing protein involved in the repair of iron-sulfur clusters damaged by oxidative and nitrosative stress conditions. This chain is Iron-sulfur cluster repair protein YtfE, found in Pectobacterium atrosepticum (strain SCRI 1043 / ATCC BAA-672) (Erwinia carotovora subsp. atroseptica).